Consider the following 362-residue polypeptide: MAEICYEVVTDACPSSVYESTPAHSRRRPRFQTVMHEDWEKNCKRSKQEALATRYSSIPRSSREDFSDQNVDVSSPRYGVSSVCGRRREMEDAVAIHPSFSSPKNSEFPQHYFGVYDGHGCSHVAARCRERLHKLVQEELSSDMEDEEEWKTTMERSFTRMDKEVVSWGDSVVTANCKCDLQTPACDSVGSTAVVSVITPDKIVVANCGDSRAVLCRNGKPVPLSTDHKPDRPDELDRIEGAGGRVIYWDCPRVLGVLAMSRAIGDNYLKPYVSCEPEVTITDRRDDDCLILASDGLWDVVSNETACSVARMCLRGGGRRQDNEDPAISDKACTEASVLLTKLALARNSSDNVSVVVIDLRR.

The 284-residue stretch at 77-360 folds into the PPM-type phosphatase domain; that stretch reads RYGVSSVCGR…DNVSVVVIDL (284 aa). Mn(2+)-binding residues include aspartate 117, glycine 118, aspartate 295, and aspartate 351.

This sequence belongs to the PP2C family. Mg(2+) is required as a cofactor. It depends on Mn(2+) as a cofactor.

It carries out the reaction O-phospho-L-seryl-[protein] + H2O = L-seryl-[protein] + phosphate. It catalyses the reaction O-phospho-L-threonyl-[protein] + H2O = L-threonyl-[protein] + phosphate. The sequence is that of Probable protein phosphatase 2C 24 from Arabidopsis thaliana (Mouse-ear cress).